Consider the following 517-residue polypeptide: 2-isopropylmalate synthase (517 aa).

One can recognise a Pyruvate carboxyltransferase domain in the interval 7 to 269; the sequence is VIIFDTTLRD…ETGIDTTQIV (263 aa). 4 residues coordinate Mn(2+): Asp-16, His-204, His-206, and Asn-240. Positions 366 to 517 are required for the condensation reaction. Not required to bind substrate; it reads LADKKREIFD…KPKAQGSGTI (152 aa). Positions 395–517 are regulatory domain; that stretch reads KFISQKISTE…KPKAQGSGTI (123 aa).

Belongs to the alpha-IPM synthase/homocitrate synthase family. LeuA type 1 subfamily. Homodimer. Remains a homodimer in the presence of L-leucine. Mn(2+) is required as a cofactor.

It is found in the cytoplasm. The catalysed reaction is 3-methyl-2-oxobutanoate + acetyl-CoA + H2O = (2S)-2-isopropylmalate + CoA + H(+). The protein operates within amino-acid biosynthesis; L-leucine biosynthesis; L-leucine from 3-methyl-2-oxobutanoate: step 1/4. Inhibited by 3-bromo substituents and Leu, the pathway end product. In terms of biological role, catalyzes the condensation of the acetyl group of acetyl-CoA with 3-methyl-2-oxobutanoate (2-ketoisovalerate) to form 3-carboxy-3-hydroxy-4-methylpentanoate (2-isopropylmalate). Complements an E.coli deletion. The polypeptide is 2-isopropylmalate synthase (Neisseria meningitidis serogroup B (strain ATCC BAA-335 / MC58)).